A 460-amino-acid polypeptide reads, in one-letter code: G2/mitotic-specific cyclin-4 (460 aa).

It belongs to the cyclin family. Cyclin AB subfamily.

Functionally, essential for the control of the cell cycle at the G2/M (mitosis) transition. Interacts with the CDC2 protein kinase to form MPF. G2/M cyclins accumulate steadily during G2 and are abruptly destroyed at mitosis. This Saccharomyces cerevisiae (strain ATCC 204508 / S288c) (Baker's yeast) protein is G2/mitotic-specific cyclin-4 (CLB4).